Consider the following 916-residue polypeptide: Protein translocase subunit SecA (916 aa).

Residues Q87, 105-109 (GEGKT), and D507 contribute to the ATP site. Zn(2+)-binding residues include C900, C902, C911, and H912.

This sequence belongs to the SecA family. In terms of assembly, monomer and homodimer. Part of the essential Sec protein translocation apparatus which comprises SecA, SecYEG and auxiliary proteins SecDF-YajC and YidC. Zn(2+) is required as a cofactor.

The protein resides in the cell inner membrane. It is found in the cytoplasm. The catalysed reaction is ATP + H2O + cellular proteinSide 1 = ADP + phosphate + cellular proteinSide 2.. Part of the Sec protein translocase complex. Interacts with the SecYEG preprotein conducting channel. Has a central role in coupling the hydrolysis of ATP to the transfer of proteins into and across the cell membrane, serving both as a receptor for the preprotein-SecB complex and as an ATP-driven molecular motor driving the stepwise translocation of polypeptide chains across the membrane. The sequence is that of Protein translocase subunit SecA from Neisseria meningitidis serogroup A / serotype 4A (strain DSM 15465 / Z2491).